The following is a 293-amino-acid chain: uncharacterized protein (293 aa).

Residues 55–77 (IVLAKEIFAVAFFSLGMSCLLMA) form a helical membrane-spanning segment.

The protein localises to the membrane. This is an uncharacterized protein from Caenorhabditis elegans.